Here is a 480-residue protein sequence, read N- to C-terminus: UDP-N-acetylmuramate--L-alanine ligase (480 aa).

129 to 135 contributes to the ATP binding site; it reads GSHGKTT.

The protein belongs to the MurCDEF family.

It is found in the cytoplasm. It catalyses the reaction UDP-N-acetyl-alpha-D-muramate + L-alanine + ATP = UDP-N-acetyl-alpha-D-muramoyl-L-alanine + ADP + phosphate + H(+). It functions in the pathway cell wall biogenesis; peptidoglycan biosynthesis. Its function is as follows. Cell wall formation. The protein is UDP-N-acetylmuramate--L-alanine ligase of Syntrophus aciditrophicus (strain SB).